The following is a 146-amino-acid chain: Hemoglobin subunit beta (146 aa).

In terms of domain architecture, Globin spans 2 to 146 (QWAAEEKQLI…VAHALARKYH (145 aa)). Heme b contacts are provided by H63 and H92.

Belongs to the globin family. Heterotetramer of two alpha chains and two beta chains. Red blood cells.

Functionally, involved in oxygen transport from the lung to the various peripheral tissues. This chain is Hemoglobin subunit beta (HBB), found in Accipiter gentilis (Northern goshawk).